We begin with the raw amino-acid sequence, 162 residues long: Small ribosomal subunit protein uS9 (162 aa).

Belongs to the universal ribosomal protein uS9 family.

The polypeptide is Small ribosomal subunit protein uS9 (Methylobacterium nodulans (strain LMG 21967 / CNCM I-2342 / ORS 2060)).